The chain runs to 476 residues: Aspartyl/glutamyl-tRNA(Asn/Gln) amidotransferase subunit B (476 aa).

It belongs to the GatB/GatE family. GatB subfamily. In terms of assembly, heterotrimer of A, B and C subunits.

The catalysed reaction is L-glutamyl-tRNA(Gln) + L-glutamine + ATP + H2O = L-glutaminyl-tRNA(Gln) + L-glutamate + ADP + phosphate + H(+). It catalyses the reaction L-aspartyl-tRNA(Asn) + L-glutamine + ATP + H2O = L-asparaginyl-tRNA(Asn) + L-glutamate + ADP + phosphate + 2 H(+). In terms of biological role, allows the formation of correctly charged Asn-tRNA(Asn) or Gln-tRNA(Gln) through the transamidation of misacylated Asp-tRNA(Asn) or Glu-tRNA(Gln) in organisms which lack either or both of asparaginyl-tRNA or glutaminyl-tRNA synthetases. The reaction takes place in the presence of glutamine and ATP through an activated phospho-Asp-tRNA(Asn) or phospho-Glu-tRNA(Gln). The chain is Aspartyl/glutamyl-tRNA(Asn/Gln) amidotransferase subunit B from Geobacillus thermodenitrificans (strain NG80-2).